Consider the following 239-residue polypeptide: UDP-2,3-diacylglucosamine hydrolase (239 aa).

Residues aspartate 9, histidine 11, aspartate 42, asparagine 80, and histidine 115 each contribute to the Mn(2+) site. 80–81 (NR) contributes to the substrate binding site. 5 residues coordinate substrate: aspartate 123, serine 161, lysine 165, lysine 168, and histidine 196. Residues histidine 196 and histidine 198 each contribute to the Mn(2+) site.

It belongs to the LpxH family. Requires Mn(2+) as cofactor.

It is found in the cell inner membrane. It carries out the reaction UDP-2-N,3-O-bis[(3R)-3-hydroxytetradecanoyl]-alpha-D-glucosamine + H2O = 2-N,3-O-bis[(3R)-3-hydroxytetradecanoyl]-alpha-D-glucosaminyl 1-phosphate + UMP + 2 H(+). Its pathway is glycolipid biosynthesis; lipid IV(A) biosynthesis; lipid IV(A) from (3R)-3-hydroxytetradecanoyl-[acyl-carrier-protein] and UDP-N-acetyl-alpha-D-glucosamine: step 4/6. In terms of biological role, hydrolyzes the pyrophosphate bond of UDP-2,3-diacylglucosamine to yield 2,3-diacylglucosamine 1-phosphate (lipid X) and UMP by catalyzing the attack of water at the alpha-P atom. Involved in the biosynthesis of lipid A, a phosphorylated glycolipid that anchors the lipopolysaccharide to the outer membrane of the cell. The sequence is that of UDP-2,3-diacylglucosamine hydrolase from Pasteurella multocida (strain Pm70).